Reading from the N-terminus, the 82-residue chain is Putative antitoxin VapB23 (82 aa).

Functionally, putative antitoxin component of a possible type II toxin-antitoxin (TA) system. The cognate toxin is VapC23. The chain is Putative antitoxin VapB23 (vapB23) from Mycobacterium tuberculosis (strain ATCC 25618 / H37Rv).